The sequence spans 146 residues: Cystatin-C (146 aa).

The N-terminal stretch at 1–26 (MAGPLRAPLLLLAILAVALAVSPAAG) is a signal peptide. Ser43 is subject to Phosphoserine. Residues 81 to 85 (QIVAG) carry the Secondary area of contact motif. 2 disulfide bridges follow: Cys99–Cys109 and Cys123–Cys143.

Belongs to the cystatin family.

Its subcellular location is the secreted. In terms of biological role, as an inhibitor of cysteine proteinases, this protein is thought to serve an important physiological role as a local regulator of this enzyme activity. The protein is Cystatin-C (CST3) of Macaca mulatta (Rhesus macaque).